Here is a 117-residue protein sequence, read N- to C-terminus: Ribosome-binding factor A (117 aa).

This sequence belongs to the RbfA family. In terms of assembly, monomer. Binds 30S ribosomal subunits, but not 50S ribosomal subunits or 70S ribosomes.

Its subcellular location is the cytoplasm. Functionally, one of several proteins that assist in the late maturation steps of the functional core of the 30S ribosomal subunit. Associates with free 30S ribosomal subunits (but not with 30S subunits that are part of 70S ribosomes or polysomes). Required for efficient processing of 16S rRNA. May interact with the 5'-terminal helix region of 16S rRNA. The chain is Ribosome-binding factor A from Syntrophobacter fumaroxidans (strain DSM 10017 / MPOB).